We begin with the raw amino-acid sequence, 287 residues long: Large ribosomal subunit protein uL2 (287 aa).

Disordered stretches follow at residues 1–30 (MGIRNYRPYTPGTRQKSVSDFSEITHDQPE) and 211–287 (NRWK…GRQS). Polar residues predominate over residues 12-22 (GTRQKSVSDFS). Composition is skewed to basic residues over residues 211–220 (NRWKGRRPKV) and 258–287 (KTRKKKKLSNALIVRRRRKSSKRGRGGRQS).

The protein belongs to the universal ribosomal protein uL2 family. Part of the 50S ribosomal subunit. Forms a bridge to the 30S subunit in the 70S ribosome.

One of the primary rRNA binding proteins. Required for association of the 30S and 50S subunits to form the 70S ribosome, for tRNA binding and peptide bond formation. It has been suggested to have peptidyltransferase activity; this is somewhat controversial. Makes several contacts with the 16S rRNA in the 70S ribosome. The protein is Large ribosomal subunit protein uL2 of Cyanothece sp. (strain PCC 7425 / ATCC 29141).